The primary structure comprises 339 residues: Ketol-acid reductoisomerase (NADP(+)) (339 aa).

One can recognise a KARI N-terminal Rossmann domain in the interval 1 to 182; that stretch reads MRVYYDRDAD…GGGRSGIIET (182 aa). Residues 24–27, K48, S51, T53, and 83–86 contribute to the NADP(+) site; these read YGSQ and DELQ. H108 is an active-site residue. Position 134 (G134) interacts with NADP(+). The KARI C-terminal knotted domain maps to 183 to 328; the sequence is NFKEECETDL…AKLRGMMPWI (146 aa). The Mg(2+) site is built by D191, E195, E227, and E231. S252 contributes to the substrate binding site.

This sequence belongs to the ketol-acid reductoisomerase family. The cofactor is Mg(2+).

It carries out the reaction (2R)-2,3-dihydroxy-3-methylbutanoate + NADP(+) = (2S)-2-acetolactate + NADPH + H(+). The enzyme catalyses (2R,3R)-2,3-dihydroxy-3-methylpentanoate + NADP(+) = (S)-2-ethyl-2-hydroxy-3-oxobutanoate + NADPH + H(+). Its pathway is amino-acid biosynthesis; L-isoleucine biosynthesis; L-isoleucine from 2-oxobutanoate: step 2/4. It participates in amino-acid biosynthesis; L-valine biosynthesis; L-valine from pyruvate: step 2/4. In terms of biological role, involved in the biosynthesis of branched-chain amino acids (BCAA). Catalyzes an alkyl-migration followed by a ketol-acid reduction of (S)-2-acetolactate (S2AL) to yield (R)-2,3-dihydroxy-isovalerate. In the isomerase reaction, S2AL is rearranged via a Mg-dependent methyl migration to produce 3-hydroxy-3-methyl-2-ketobutyrate (HMKB). In the reductase reaction, this 2-ketoacid undergoes a metal-dependent reduction by NADPH to yield (R)-2,3-dihydroxy-isovalerate. This is Ketol-acid reductoisomerase (NADP(+)) from Sinorhizobium medicae (strain WSM419) (Ensifer medicae).